We begin with the raw amino-acid sequence, 196 residues long: Respiratory growth induced protein 1 (196 aa).

The tract at residues 28 to 48 (KSRSSSITSIESEGSIQSVLK) is disordered. Residues 29–45 (SRSSSITSIESEGSIQS) show a composition bias toward low complexity.

Belongs to the RGI1 family.

Its subcellular location is the cell membrane. In terms of biological role, involved in the control of energetic metabolism and significantly contribute to cell fitness, especially under respiratory growth conditions. The chain is Respiratory growth induced protein 1 (RGI1) from Debaryomyces hansenii (strain ATCC 36239 / CBS 767 / BCRC 21394 / JCM 1990 / NBRC 0083 / IGC 2968) (Yeast).